Reading from the N-terminus, the 209-residue chain is Uracil phosphoribosyltransferase (209 aa).

5-phospho-alpha-D-ribose 1-diphosphate is bound by residues Arg-79, Arg-104, and 131-139 (DPMLATANS). Uracil is bound by residues Ile-194 and 199–201 (GDA). Asp-200 is a binding site for 5-phospho-alpha-D-ribose 1-diphosphate.

It belongs to the UPRTase family. Mg(2+) is required as a cofactor.

The enzyme catalyses UMP + diphosphate = 5-phospho-alpha-D-ribose 1-diphosphate + uracil. It participates in pyrimidine metabolism; UMP biosynthesis via salvage pathway; UMP from uracil: step 1/1. Its activity is regulated as follows. Allosterically activated by GTP. Its function is as follows. Catalyzes the conversion of uracil and 5-phospho-alpha-D-ribose 1-diphosphate (PRPP) to UMP and diphosphate. This Mesorhizobium japonicum (strain LMG 29417 / CECT 9101 / MAFF 303099) (Mesorhizobium loti (strain MAFF 303099)) protein is Uracil phosphoribosyltransferase.